A 605-amino-acid chain; its full sequence is MSSTYSSIQRHRKDTSSSGSNTTPLARRRRFDEGPADPGSAPHLDSFVVPPTRHDDGTKRQPGRRKQRWSHGENKVADLLQMPTALTGHLTPEQAEAYAIYYRIEEISQQLRLGDIVPPEDERSPSPPPQYDSMGKRTNTRDARYTRQLEEERHRLIERAQRLIPNYRPPVDYHKPAKTQEVVYIPVNEYPDINFIGQLLGARGKTLKKMEQESGAKICIRGRGSVKQGKGRTDIPFQSTAEDDLHCLIISEDEEKIARAVQLVQQVIDTAASVPEGQNELKRSQLRELAALNGTLRDDENYGGAPQSSSGDEMDDRNKRRNNFMSSIVCHICGSKGHFARDCLEKGTNAGTSENADREYDALMRELQGEGVIDTASQQQSIAQNPNTNNVSKLPPAVTGSNAAPINMRKPMSERGGSFDRFDRGGFNQSNQREPQQQSHQQNMHNTNGNNYDRYDRNFNNSSNSSPELPPWHRPTPPSQPAAPPWLRRDNYKKHDKVSVQQSMQQSPWNRDTRQHQHQHQPPVHHQSMFNNNQSPIGPPGMSSSGFGGYGGAPAGVPGMSVPPGPPGLSKVPPPPPPPGVPGMDGDQPIRHPPPPPPGVIGPPK.

2 disordered regions span residues Met-1 to Lys-75 and Val-117 to Asn-139. Positions Tyr-184 to Val-264 constitute a KH domain. A disordered region spans residues Gly-294–Lys-319. The CCHC-type zinc finger occupies Ile-328 to Glu-345. The span at Ala-376–Ser-392 shows a compositional bias: polar residues. Positions Ala-376 to Lys-605 are disordered. Residues Pro-411 to Arg-424 show a composition bias toward basic and acidic residues. Residues Asn-428–His-445 are compositionally biased toward polar residues. A compositionally biased stretch (low complexity) spans Asn-446 to Ser-466. Positions Glu-468 to Pro-484 are enriched in pro residues. Over residues Ser-499 to Asn-510 the composition is skewed to polar residues. Pro residues-rich tracts occupy residues Ser-561–Val-581 and Arg-591–Lys-605.

Belongs to the BBP/SF1 family.

It localises to the nucleus. Its function is as follows. Necessary for the splicing of pre-mRNA. Has a role in the recognition of the branch site (5'-UACUAAC-3'), the pyrimidine tract and the 3'-splice site at the 3'-end of introns. The polypeptide is Branchpoint-bridging protein (BBP) (Yarrowia lipolytica (strain CLIB 122 / E 150) (Yeast)).